The chain runs to 165 residues: uncharacterized protein (165 aa).

Residues 4–26 (FVIGTMIALAGLLVGGGVGSYFT) form a helical membrane-spanning segment.

It localises to the membrane. This is an uncharacterized protein from Aquifex aeolicus (strain VF5).